Consider the following 323-residue polypeptide: tRNA U34 carboxymethyltransferase (323 aa).

Carboxy-S-adenosyl-L-methionine-binding positions include K91, W105, K110, G130, 152 to 154, 181 to 182, M196, Y200, and R315; these read DPT and IE.

The protein belongs to the class I-like SAM-binding methyltransferase superfamily. CmoB family. In terms of assembly, homotetramer.

It catalyses the reaction carboxy-S-adenosyl-L-methionine + 5-hydroxyuridine(34) in tRNA = 5-carboxymethoxyuridine(34) in tRNA + S-adenosyl-L-homocysteine + H(+). In terms of biological role, catalyzes carboxymethyl transfer from carboxy-S-adenosyl-L-methionine (Cx-SAM) to 5-hydroxyuridine (ho5U) to form 5-carboxymethoxyuridine (cmo5U) at position 34 in tRNAs. The sequence is that of tRNA U34 carboxymethyltransferase from Salmonella arizonae (strain ATCC BAA-731 / CDC346-86 / RSK2980).